We begin with the raw amino-acid sequence, 409 residues long: Peptidase T (409 aa).

Position 78 (His-78) interacts with Zn(2+). Asp-80 is an active-site residue. Asp-140 lines the Zn(2+) pocket. The Proton acceptor role is filled by Glu-173. 3 residues coordinate Zn(2+): Glu-174, Asp-196, and His-379.

It belongs to the peptidase M20B family. The cofactor is Zn(2+).

Its subcellular location is the cytoplasm. The enzyme catalyses Release of the N-terminal residue from a tripeptide.. Its function is as follows. Cleaves the N-terminal amino acid of tripeptides. The protein is Peptidase T of Salmonella enteritidis PT4 (strain P125109).